The sequence spans 1333 residues: NPC1-like intracellular cholesterol transporter 1 (1333 aa).

Residues 1–20 form the signal peptide; sequence MAAAWQGWLLWALLLNSAQG. The Extracellular portion of the chain corresponds to 21–284; it reads ELYTPTHKAG…SFYMGRMPGW (264 aa). Intrachain disulfides connect Cys32-Cys90, Cys38-Cys56, Cys77-Cys125, Cys91-Cys129, Cys113-Cys254, Cys116-Cys172, Cys189-Cys197, Cys243-Cys259, and Cys256-Cys263. The helical transmembrane segment at 285-305 threads the bilayer; that stretch reads LALIIIFTAVFVLLSVVLVYL. The Cytoplasmic segment spans residues 306-352; it reads RVASNRNKNKTAGSQEAPNLPRKRRFSPHTVLGRFFESWGTRVASWP. A helical transmembrane segment spans residues 353-373; sequence LTVLALSFIVVIALSVGLTFI. Topologically, residues 374–632 are extracellular; it reads ELTTDPVELW…DEINRTTIQD (259 aa). Cystine bridges form between Cys471–Cys485 and Cys525–Cys542. Residues 632-797 form the SSD domain; it reads DLPVFAISYL…MTAFVALLSL (166 aa). Residues 633–653 form a helical membrane-spanning segment; it reads LPVFAISYLIVFLYISLALGS. Residues 654 to 665 lie on the Cytoplasmic side of the membrane; that stretch reads YSRWSRVAVDSK. The helical transmembrane segment at 666 to 686 threads the bilayer; sequence ATLGLGGVAVVLGAVVAAMGF. Residues 687–696 are Extracellular-facing; that stretch reads YSYLGVPSSL. Residues 697–717 traverse the membrane as a helical segment; it reads VIIQVVPFLVLAVGADNIFIF. At 718–742 the chain is on the cytoplasmic side; that stretch reads VLEYQRLPRMPGEQREAHIGRTLGS. The chain crosses the membrane as a helical span at residues 743–763; that stretch reads VAPSMLLCSLSEAICFFLGAL. Over 764-776 the chain is Extracellular; sequence TSMPAVRTFALTS. The helical transmembrane segment at 777-797 threads the bilayer; that stretch reads GLAIIFDFLLQMTAFVALLSL. Residues 798 to 846 are Cytoplasmic-facing; it reads DSKRQEASRPDVVCCFSSRNLPPPKQKEGLLLCFFRKIYTPFLLHRFIR. The helical transmembrane segment at 847-867 threads the bilayer; the sequence is PVVLLLFLVLFGANLYLMCNI. At 868 to 1113 the chain is on the extracellular side; the sequence is SVGLDQDLAL…QQYLTVLPEG (246 aa). Cystine bridges form between Cys920–Cys925, Cys967–Cys1025, and Cys981–Cys990. A helical membrane pass occupies residues 1114-1134; it reads IFTLALCFVPTFVVCYLLLGL. Residues 1135-1142 lie on the Cytoplasmic side of the membrane; sequence DIRSGILN. Residues 1143-1163 form a helical membrane-spanning segment; the sequence is LLSIIMILVDTIGLMAVWGIS. Residues 1164 to 1165 lie on the Extracellular side of the membrane; the sequence is YN. Residues 1166–1186 traverse the membrane as a helical segment; it reads AVSLINLVTAVGMSVEFVSHI. Topologically, residues 1187–1206 are cytoplasmic; the sequence is TRSFAVSTKPTRLERAKDAT. The helical transmembrane segment at 1207 to 1227 threads the bilayer; it reads IFMGSAVFAGVAMTNFPGILI. Residues 1228-1242 lie on the Extracellular side of the membrane; it reads LGFAQAQLIQIFFFR. A helical transmembrane segment spans residues 1243 to 1263; the sequence is LNLLITLLGLLHGLVFLPVVL. At 1264-1333 the chain is on the cytoplasmic side; that stretch reads SYLGPDVNQA…SSLPKSDQKF (70 aa).

This sequence belongs to the patched family. In terms of assembly, interacts with RAB11A, MYO5B and RAB11FIP2. Interaction with RAB11A, MYO5B and RAB11FIP2 is required for proper transport to the plasma membrane upon cholesterol depletion. Interacts with NPC2. Interacts with LIMA1. Highly glycosylated. As to expression, expressed in small intestine, stomach and muscle, along with detectable expression in lung, heart, gall bladder, brain, testis, skin and liver. Expression in liver is extremely low.

It localises to the apical cell membrane. The protein resides in the cell membrane. It carries out the reaction cholesterol(in) = cholesterol(out). The catalysed reaction is sitosterol(out) = sitosterol(in). In terms of biological role, plays a major role in cholesterol homeostasis. Critical for the uptake of cholesterol across the plasma membrane of the intestinal enterocyte. Involved in plant sterol absorption, it transports sitosterol, although at lower rates than cholesterol. May have a function in the transport of multiple lipids and their homeostasis, thereby influencing lipid metabolism regulation. May be involved in caveolin trafficking from the plasma membrane. Acts as a negative regulator of NPC2 and down-regulates its expression and secretion by inhibiting its maturation and accelerating its degradation. The sequence is that of NPC1-like intracellular cholesterol transporter 1 from Mus musculus (Mouse).